Reading from the N-terminus, the 230-residue chain is Demethylmenaquinone methyltransferase (230 aa).

S-adenosyl-L-methionine-binding positions include Thr62, Asp80, 102–103 (DG), and Ser119.

It belongs to the class I-like SAM-binding methyltransferase superfamily. MenG/UbiE family.

The enzyme catalyses a 2-demethylmenaquinol + S-adenosyl-L-methionine = a menaquinol + S-adenosyl-L-homocysteine + H(+). The protein operates within quinol/quinone metabolism; menaquinone biosynthesis; menaquinol from 1,4-dihydroxy-2-naphthoate: step 2/2. In terms of biological role, methyltransferase required for the conversion of demethylmenaquinol (DMKH2) to menaquinol (MKH2). This chain is Demethylmenaquinone methyltransferase, found in Streptomyces griseus subsp. griseus (strain JCM 4626 / CBS 651.72 / NBRC 13350 / KCC S-0626 / ISP 5235).